Reading from the N-terminus, the 782-residue chain is MEKLIQSTISLFISLSLKISTKSYKSIISILFIISLLSIILTTTITVYHDPERIITTTTTTTSASKSVFTASSPKQQDKLQQEIDQHQSDNSHEQQGKRIIIFPNNFPLIKNDQLVKYYIDTMNQALQPHDLIYRNCFEYKIPQLSYSSQKIDVFSDGGGGDQSGIKCRKLSSQVNVKVSPAINKNGNMRQILTRFMQDDGLYFQEFLPFFPNLKEQLQSADDDIINKHWYQFIGSTVWLQQYGVHLMISRIIYTEVDQGLPIISLAYLQLFDRNWNELNDVELIIPDYETTTTTTTQSKYKYKSIIYPYFAPIPIYHNVKQLNTGKFFGVEDPRIMLITNEFGFEEPIIIYNSHHRKISNIDYENGGDNQGKINFKNYRSLFIGWLWKTQIGKFNLEQLPSEHTLDNHKANKNDANNNDYSKNEYIKIKELTRPNNQRNLLEKNWSLFLNHQEKLNHGYHSFIYFIYQFKDLKILKCPLSSSTTKKNNDGDDRFDSGCQWEYQINDDDNFGSGYLHGGTELINVNELLDNYLSKSSTSTSINGKQLTNSIKDRLPLNRQIWIGFARAAMRHCGCSETMYRPNMVILVKDDVPTNTNIASGKSNYRLTHVSSFMDLGIEVLPWWEDKGLCEGKNVVIPNGISSWTIENESNNLESESSTITSNNLVDYLTITITRRDTTIDLVYIKGLLNALLLNPDNNNSNNDVDDTEEGSSIFKSSVLFNVDLVKDYSSTTTTTTTKNVNKNLDCALQYSHKYCQIYGEKLKIEDEFNNKGKDKGKDKSN.

Residues 1–26 (MEKLIQSTISLFISLSLKISTKSYKS) lie on the Cytoplasmic side of the membrane. Residues 27 to 47 (IISILFIISLLSIILTTTITV) form a helical membrane-spanning segment. The Extracellular segment spans residues 48–782 (YHDPERIITT…GKDKGKDKSN (735 aa)). Residues 66–96 (KSVFTASSPKQQDKLQQEIDQHQSDNSHEQQ) are disordered. Positions 76–96 (QQDKLQQEIDQHQSDNSHEQQ) are enriched in basic and acidic residues. N445, N648, and N699 each carry an N-linked (GlcNAc...) asparagine glycan.

The protein belongs to the BMT family.

Its subcellular location is the membrane. Beta-mannosyltransferase involved in cell wall biosynthesis through beta-1,2-mannosylation of cell wall phosphopeptidomannan. In Candida albicans (strain SC5314 / ATCC MYA-2876) (Yeast), this protein is Beta-mannosyltransferase 9 (BMT9).